A 332-amino-acid polypeptide reads, in one-letter code: Fructose-1,6-bisphosphatase class 1 (332 aa).

Positions 89, 110, 112, and 113 each coordinate Mg(2+). Residues 113–116 (DGSS), asparagine 206, tyrosine 239, 257–259 (YLY), and lysine 269 contribute to the substrate site. Mg(2+) is bound at residue glutamate 275.

The protein belongs to the FBPase class 1 family. In terms of assembly, homotetramer. It depends on Mg(2+) as a cofactor.

It is found in the cytoplasm. The catalysed reaction is beta-D-fructose 1,6-bisphosphate + H2O = beta-D-fructose 6-phosphate + phosphate. The protein operates within carbohydrate biosynthesis; gluconeogenesis. In Enterobacter sp. (strain 638), this protein is Fructose-1,6-bisphosphatase class 1.